Reading from the N-terminus, the 907-residue chain is HMG box transcription factor BBX (907 aa).

Basic and acidic residues predominate over residues 1–19 (MKGSNRNKDHSTEGEGDGK). Disordered stretches follow at residues 1 to 24 (MKGSNRNKDHSTEGEGDGKRPKRK), 37 to 80 (LDFS…EQRA), 152 to 185 (TTNKPVKSPTPTVNPRKKLWAFPPDSSRDLPTPK), and 220 to 242 (TPEASSGTCRPDISESPELRQKS). Composition is skewed to acidic residues over residues 39–52 (FSEEEEEDEEEEDI) and 61–75 (DGLEQDVAETEDDES). Positions 80–148 (ARRPMNAFLL…AFMKANPGYR (69 aa)) form a DNA-binding region, HMG box. Positions 152-164 (TTNKPVKSPTPTV) are enriched in polar residues. Ser-242 carries the post-translational modification Phosphoserine. Lys-384 is covalently cross-linked (Glycyl lysine isopeptide (Lys-Gly) (interchain with G-Cter in SUMO2)). 3 disordered regions span residues 435–483 (IIED…DIES), 495–612 (DWGV…SERS), and 628–672 (TSLR…KKFK). The segment covering 447-457 (KIKKKKKKNKL) has biased composition (basic residues). Phosphoserine is present on residues Ser-476 and Ser-483. Composition is skewed to basic and acidic residues over residues 496–506 (WGVDKLGETPR) and 534–550 (KKVSKEKCSDITKESRP). Residue Lys-571 forms a Glycyl lysine isopeptide (Lys-Gly) (interchain with G-Cter in SUMO2) linkage. Residues 591-612 (KPEDSDCHRKTETCGSRKSERS) are compositionally biased toward basic and acidic residues. The span at 656–668 (ESWTFNQSGTSGS) shows a compositional bias: polar residues. A Glycyl lysine isopeptide (Lys-Gly) (interchain with G-Cter in SUMO2) cross-link involves residue Lys-693. Ser-701 carries the post-translational modification Phosphoserine. Disordered stretches follow at residues 708-736 (KCVSTPRKKKKTGNMSSESTKTSKGSGDK), 769-854 (NALS…SSTP), and 877-907 (VHRGQRSTPLTHDGQPKEMPQAPVLISCADQ). Positions 723-732 (SSESTKTSKG) are enriched in low complexity. Over residues 772–783 (SIPNTPEPTTMQ) the composition is skewed to polar residues. Phosphoserine is present on Ser-789. The span at 790–801 (QKRKARKTKITH) shows a compositional bias: basic residues. Ser-811 is subject to Phosphoserine.

The protein resides in the nucleus. Its function is as follows. Transcription factor that is necessary for cell cycle progression from G1 to S phase. This Mus musculus (Mouse) protein is HMG box transcription factor BBX (Bbx).